A 675-amino-acid polypeptide reads, in one-letter code: Pesticidal crystal protein Cry25Aa (675 aa).

Belongs to the delta endotoxin family.

Functionally, promotes colloidosmotic lysis by binding to the midgut epithelial cells of insects. The protein is Pesticidal crystal protein Cry25Aa (cry25Aa) of Bacillus thuringiensis subsp. jegathesan.